Here is a 201-residue protein sequence, read N- to C-terminus: Small ribosomal subunit protein uS4c (201 aa).

Residues 15–43 (LGALPGLTSKRPTPGSDLRNQSRSGKRSQ) are disordered. An S4 RNA-binding domain is found at 89–149 (MRLDNILFRL…DEQKSRALIQ (61 aa)).

Belongs to the universal ribosomal protein uS4 family. In terms of assembly, part of the 30S ribosomal subunit. Contacts protein S5. The interaction surface between S4 and S5 is involved in control of translational fidelity.

It localises to the plastid. It is found in the chloroplast. One of the primary rRNA binding proteins, it binds directly to 16S rRNA where it nucleates assembly of the body of the 30S subunit. In terms of biological role, with S5 and S12 plays an important role in translational accuracy. This Nandina domestica (Heavenly bamboo) protein is Small ribosomal subunit protein uS4c (rps4).